Reading from the N-terminus, the 150-residue chain is Large ribosomal subunit protein bL9 (150 aa).

It belongs to the bacterial ribosomal protein bL9 family.

In terms of biological role, binds to the 23S rRNA. This Cupriavidus taiwanensis (strain DSM 17343 / BCRC 17206 / CCUG 44338 / CIP 107171 / LMG 19424 / R1) (Ralstonia taiwanensis (strain LMG 19424)) protein is Large ribosomal subunit protein bL9.